The sequence spans 429 residues: Histidine--tRNA ligase (429 aa).

Belongs to the class-II aminoacyl-tRNA synthetase family. As to quaternary structure, homodimer.

The protein resides in the cytoplasm. The enzyme catalyses tRNA(His) + L-histidine + ATP = L-histidyl-tRNA(His) + AMP + diphosphate + H(+). In Pseudomonas fluorescens (strain Pf0-1), this protein is Histidine--tRNA ligase.